The following is a 418-amino-acid chain: Zinc finger protein 566 (418 aa).

Positions 6–77 (VMFSDVSVDF…DRELTRGQWP (72 aa)) constitute a KRAB domain. The C2H2-type 1; degenerate zinc finger occupies 169 to 193 (KFCASKEYRKTFRHGSQFATHEIIH). C2H2-type zinc fingers lie at residues 199 to 221 (YECK…QKIH), 227 to 249 (FECK…HRIH), 255 to 277 (YECK…QRIH), 283 to 305 (YECK…QRIH), 311 to 333 (YECK…QRIH), 339 to 361 (YECK…QRIH), and 367 to 389 (YECK…HRIH). Glycyl lysine isopeptide (Lys-Gly) (interchain with G-Cter in SUMO2) cross-links involve residues Lys-314 and Lys-328.

Belongs to the krueppel C2H2-type zinc-finger protein family.

The protein localises to the nucleus. May be involved in transcriptional regulation. The polypeptide is Zinc finger protein 566 (ZNF566) (Pan troglodytes (Chimpanzee)).